The chain runs to 362 residues: Tyrosyl-DNA phosphodiesterase 2 (362 aa).

M1 is modified (N-acetylmethionine). Residues 1–20 form a disordered region; that stretch reads MELGSCLEGGREAAEEEGEP. Residues K23 and K82 each participate in a glycyl lysine isopeptide (Lys-Gly) (interchain with G-Cter in SUMO2) cross-link. The interval 87–109 is disordered; sequence LTNEETTDSTTSKISPSEDTQQE. A phosphothreonine; by ACVR1B mark is found at T88 and T92. The segment covering 94-109 has biased composition (polar residues); that stretch reads DSTTSKISPSEDTQQE. At S95 the chain carries Phosphoserine. Residues 120–124 are interaction with 5' end of substrate DNA; that stretch reads NIDGL. The Mg(2+) site is built by D122 and E152. The interval 226–231 is interaction with 5' end of substrate DNA; that stretch reads HLESTR. The Proton donor/acceptor role is filled by D262. The interaction with 5' end of substrate DNA stretch occupies residues 264–266; it reads NLR.

The protein belongs to the CCR4/nocturin family. In terms of assembly, interacts with TRAF2, TRAF3, TRAF5, TRAF6, TNFRSF8/CD30, TNFRSF5/CD40, TNFRSF1B/TNF-R75, ETS1, ETS2, FLI1, SMAD3 and ACVR1B/ALK4. (Microbial infection) Interacts with Hantaan hantavirus nucleoprotein. As to quaternary structure, (Microbial infection) Interacts with Seoul hantavirus nucleoprotein. The cofactor is Mg(2+). It depends on Mn(2+) as a cofactor. Post-translationally, ubiquitinated by TRAF6. In terms of tissue distribution, widely expressed. Highly expressed in various brain regions, including the frontal and occipital lobes, the hippocampus, the striatum and the cerebellum.

It is found in the nucleus. The protein resides in the PML body. The protein localises to the nucleolus. Its subcellular location is the cytoplasm. In terms of biological role, DNA repair enzyme that can remove a variety of covalent adducts from DNA through hydrolysis of a 5'-phosphodiester bond, giving rise to DNA with a free 5' phosphate. Catalyzes the hydrolysis of dead-end complexes between DNA and the topoisomerase 2 (TOP2) active site tyrosine residue. The 5'-tyrosyl DNA phosphodiesterase activity can enable the repair of TOP2-induced DNA double-strand breaks/DSBs without the need for nuclease activity, creating a 'clean' DSB with 5'-phosphate termini that are ready for ligation. Thereby, protects the transcription of many genes involved in neurological development and maintenance from the abortive activity of TOP2. Hydrolyzes 5'-phosphoglycolates on protruding 5' ends on DSBs due to DNA damage by radiation and free radicals. Has preference for single-stranded DNA or duplex DNA with a 4 base pair overhang as substrate. Acts as a regulator of ribosome biogenesis following stress. Also has 3'-tyrosyl DNA phosphodiesterase activity, but less efficiently and much slower than TDP1. Constitutes the major if not only 5'-tyrosyl-DNA phosphodiesterase in cells. Also acts as an adapter by participating in the specific activation of MAP3K7/TAK1 in response to TGF-beta: associates with components of the TGF-beta receptor-TRAF6-TAK1 signaling module and promotes their ubiquitination dependent complex formation. Involved in non-canonical TGF-beta induced signaling routes. May also act as a negative regulator of ETS1 and may inhibit NF-kappa-B activation. Its function is as follows. (Microbial infection) Used by picornaviruses to remove the small polypeptide, VPg (virus Protein genome-linked, the primer for viral RNA synthesis), from the genomic RNA of the virus. Acts as a 5'-tyrosyl RNA phosphodiesterase and cleaves the covalent VPg-Tyr-RNA bond. This cleavage would play a role in viral replication and occur in viral replication vesicles, but would not act on viral mRNA. The protein is Tyrosyl-DNA phosphodiesterase 2 of Homo sapiens (Human).